The sequence spans 229 residues: Cytidylate kinase (229 aa).

Residue 7 to 15 (GPAGAGKSS) participates in ATP binding.

Belongs to the cytidylate kinase family. Type 1 subfamily.

It is found in the cytoplasm. The catalysed reaction is CMP + ATP = CDP + ADP. The enzyme catalyses dCMP + ATP = dCDP + ADP. The chain is Cytidylate kinase from Rhodopirellula baltica (strain DSM 10527 / NCIMB 13988 / SH1).